Consider the following 505-residue polypeptide: One cut domain family member 2 (505 aa).

Disordered stretches follow at residues 29–94 (LGTL…GTAA), 165–190 (KFHHPHPHHHPHHHHHHHHHHQRLSG), and 275–333 (EQHL…QLEE). Gly residues predominate over residues 35-56 (PVGGGSGGGGGGGGGGGGGGPG). The segment covering 167 to 187 (HHPHPHHHPHHHHHHHHHHQR) has biased composition (basic residues). Positions 325 to 411 (VATSGQLEEI…QRMSALRLAA (87 aa)) form a DNA-binding region, CUT. Positions 427-486 (QKKSRLVFTDLQRRTLFAIFKENKRPSKEMQITISQQLGLELTTVSNFFMNARRRSLEKW) form a DNA-binding region, homeobox.

Belongs to the CUT homeobox family.

The protein resides in the nucleus. In terms of biological role, transcriptional activator. Activates the transcription of a number of liver genes such as HNF3B. In Mus musculus (Mouse), this protein is One cut domain family member 2 (Onecut2).